The primary structure comprises 156 residues: ATP synthase subunit b (156 aa).

The chain crosses the membrane as a helical span at residues 7-27 (LFAQMIVFFVLWWVVARFVWP).

Belongs to the ATPase B chain family. In terms of assembly, F-type ATPases have 2 components, F(1) - the catalytic core - and F(0) - the membrane proton channel. F(1) has five subunits: alpha(3), beta(3), gamma(1), delta(1), epsilon(1). F(0) has three main subunits: a(1), b(2) and c(10-14). The alpha and beta chains form an alternating ring which encloses part of the gamma chain. F(1) is attached to F(0) by a central stalk formed by the gamma and epsilon chains, while a peripheral stalk is formed by the delta and b chains.

Its subcellular location is the cell inner membrane. F(1)F(0) ATP synthase produces ATP from ADP in the presence of a proton or sodium gradient. F-type ATPases consist of two structural domains, F(1) containing the extramembraneous catalytic core and F(0) containing the membrane proton channel, linked together by a central stalk and a peripheral stalk. During catalysis, ATP synthesis in the catalytic domain of F(1) is coupled via a rotary mechanism of the central stalk subunits to proton translocation. Its function is as follows. Component of the F(0) channel, it forms part of the peripheral stalk, linking F(1) to F(0). The polypeptide is ATP synthase subunit b (Polynucleobacter necessarius subsp. necessarius (strain STIR1)).